A 178-amino-acid chain; its full sequence is Crossover junction endodeoxyribonuclease RuvC (178 aa).

Active-site residues include D7, E67, and D139. D7, E67, and D139 together coordinate Mg(2+).

It belongs to the RuvC family. Homodimer which binds Holliday junction (HJ) DNA. The HJ becomes 2-fold symmetrical on binding to RuvC with unstacked arms; it has a different conformation from HJ DNA in complex with RuvA. In the full resolvosome a probable DNA-RuvA(4)-RuvB(12)-RuvC(2) complex forms which resolves the HJ. The cofactor is Mg(2+).

The protein localises to the cytoplasm. It carries out the reaction Endonucleolytic cleavage at a junction such as a reciprocal single-stranded crossover between two homologous DNA duplexes (Holliday junction).. The RuvA-RuvB-RuvC complex processes Holliday junction (HJ) DNA during genetic recombination and DNA repair. Endonuclease that resolves HJ intermediates. Cleaves cruciform DNA by making single-stranded nicks across the HJ at symmetrical positions within the homologous arms, yielding a 5'-phosphate and a 3'-hydroxyl group; requires a central core of homology in the junction. The consensus cleavage sequence is 5'-(A/T)TT(C/G)-3'. Cleavage occurs on the 3'-side of the TT dinucleotide at the point of strand exchange. HJ branch migration catalyzed by RuvA-RuvB allows RuvC to scan DNA until it finds its consensus sequence, where it cleaves and resolves the cruciform DNA. The chain is Crossover junction endodeoxyribonuclease RuvC from Trichlorobacter lovleyi (strain ATCC BAA-1151 / DSM 17278 / SZ) (Geobacter lovleyi).